The chain runs to 536 residues: Mitogen-activated protein kinase kinase kinase mom-4 (536 aa).

Over residues 1 to 20 (MDNSSQSKPSSSSSSHSPSP) the composition is skewed to low complexity. Positions 1 to 34 (MDNSSQSKPSSSSSSHSPSPAAITPTQRTTRDSG) are disordered. The Protein kinase domain maps to 51-305 (NLNSHYLGKG…SSECVEYFTL (255 aa)). Residues 57-65 (LGKGTYGLV) and lysine 84 each bind ATP. Aspartate 176 serves as the catalytic Proton acceptor. Residues 314–438 (SVPLSDSSTN…EHRRDSNDEE (125 aa)) are disordered. Polar residues-rich tracts occupy residues 315 to 325 (VPLSDSSTNGP) and 350 to 366 (NNRT…QQPG). The segment covering 405–438 (KNFRDRAKSEQRQPHRDARPPPPFEHRRDSNDEE) has biased composition (basic and acidic residues).

The protein belongs to the protein kinase superfamily. STE Ser/Thr protein kinase family. MAP kinase kinase kinase subfamily. Interacts with, and is activated by, tap-1. Mg(2+) is required as a cofactor. Post-translationally, may be autophosphorylated.

It catalyses the reaction L-seryl-[protein] + ATP = O-phospho-L-seryl-[protein] + ADP + H(+). The enzyme catalyses L-threonyl-[protein] + ATP = O-phospho-L-threonyl-[protein] + ADP + H(+). Functionally, part of the Wnt signaling pathway essential for the specification of the mesodermal cell fate in early embryos. Stimulates the wrm-1/lit-1-dependent phosphorylation of pop-1 and plays a role in the initial nuclear accumulation of wrm-1. This chain is Mitogen-activated protein kinase kinase kinase mom-4, found in Caenorhabditis elegans.